Consider the following 406-residue polypeptide: Cysteine desulfurase (406 aa).

N6-(pyridoxal phosphate)lysine is present on lysine 226. Cysteine 364 acts as the Cysteine persulfide intermediate in catalysis.

The protein belongs to the class-V pyridoxal-phosphate-dependent aminotransferase family. Csd subfamily. As to quaternary structure, homodimer. Interacts with SufE and the SufBCD complex composed of SufB, SufC and SufD. The interaction with SufE is required to mediate the direct transfer of the sulfur atom from the S-sulfanylcysteine. The cofactor is pyridoxal 5'-phosphate.

The protein resides in the cytoplasm. It catalyses the reaction (sulfur carrier)-H + L-cysteine = (sulfur carrier)-SH + L-alanine. It carries out the reaction L-selenocysteine + AH2 = hydrogenselenide + L-alanine + A + H(+). It functions in the pathway cofactor biosynthesis; iron-sulfur cluster biosynthesis. Functionally, cysteine desulfurases mobilize the sulfur from L-cysteine to yield L-alanine, an essential step in sulfur metabolism for biosynthesis of a variety of sulfur-containing biomolecules. Component of the suf operon, which is activated and required under specific conditions such as oxidative stress and iron limitation. Acts as a potent selenocysteine lyase in vitro, that mobilizes selenium from L-selenocysteine. Selenocysteine lyase activity is however unsure in vivo. This is Cysteine desulfurase from Salmonella choleraesuis (strain SC-B67).